We begin with the raw amino-acid sequence, 256 residues long: Alcohol dehydrogenase (256 aa).

12–35 (FVAGLGGIGLDTSKELVKRDLKNL) contacts NAD(+). Substrate is bound at residue serine 140. The Proton acceptor role is filled by tyrosine 153.

This sequence belongs to the short-chain dehydrogenases/reductases (SDR) family. Homodimer.

The enzyme catalyses a primary alcohol + NAD(+) = an aldehyde + NADH + H(+). The catalysed reaction is a secondary alcohol + NAD(+) = a ketone + NADH + H(+). In Drosophila orena (Fruit fly), this protein is Alcohol dehydrogenase (Adh).